Here is a 1638-residue protein sequence, read N- to C-terminus: DNA polymerase III PolC-type (1638 aa).

Residues 193 to 212 (SEIKKQRSEERESKNTREAK) are disordered. Over residues 194 to 212 (EIKKQRSEERESKNTREAK) the composition is skewed to basic and acidic residues. In terms of domain architecture, Exonuclease spans 596–752 (YVVFDVETTG…FDAEATGRLL (157 aa)).

This sequence belongs to the DNA polymerase type-C family. PolC subfamily.

It is found in the cytoplasm. The catalysed reaction is DNA(n) + a 2'-deoxyribonucleoside 5'-triphosphate = DNA(n+1) + diphosphate. Required for replicative DNA synthesis. This DNA polymerase also exhibits 3' to 5' exonuclease activity. This is DNA polymerase III PolC-type from Lactococcus lactis subsp. lactis (strain IL1403) (Streptococcus lactis).